A 171-amino-acid polypeptide reads, in one-letter code: T-cell surface glycoprotein CD3 delta chain (171 aa).

The first 21 residues, 1–21 (MEHSTFLSGLVLATLLSQVSP), serve as a signal peptide directing secretion. At 22–105 (FKIPIEELED…CVELDPATVA (84 aa)) the chain is on the extracellular side. Cysteines 37 and 73 form a disulfide. N-linked (GlcNAc...) asparagine glycans are attached at residues Asn-38 and Asn-74. Residues 106–126 (GIIVTDVIATLLLALGVFCFA) traverse the membrane as a helical segment. Residues 127–171 (GHETGRLSGAADTQALLRNDQVYQPLRDRDDAQYSHLGGNWARNK) lie on the Cytoplasmic side of the membrane. Residues 138–166 (DTQALLRNDQVYQPLRDRDDAQYSHLGGN) form the ITAM domain. Tyr-149 and Tyr-160 each carry phosphotyrosine.

As to quaternary structure, the TCR-CD3 complex is composed of a CD3D/CD3E and a CD3G/CD3E heterodimers that preferentially associate with TCRalpha and TCRbeta, respectively, to form TCRalpha/CD3E/CD3G and TCRbeta/CD3G/CD3E trimers. In turn, the hexamer interacts with CD3Z homodimer to form the TCR-CD3 complex. Alternatively, TCRalpha and TCRbeta can be replaced by TCRgamma and TCRdelta. Interacts with coreceptors CD4 and CD8. In terms of processing, phosphorylated on Tyr residues after T-cell receptor triggering by LCK in association with CD4/CD8. CD3D is mostly present on T-lymphocytes with its TCR-CD3 partners. Present also in fetal NK-cells.

The protein localises to the cell membrane. In terms of biological role, part of the TCR-CD3 complex present on T-lymphocyte cell surface that plays an essential role in adaptive immune response. When antigen presenting cells (APCs) activate T-cell receptor (TCR), TCR-mediated signals are transmitted across the cell membrane by the CD3 chains CD3D, CD3E, CD3G and CD3Z. All CD3 chains contain immunoreceptor tyrosine-based activation motifs (ITAMs) in their cytoplasmic domain. Upon TCR engagement, these motifs become phosphorylated by Src family protein tyrosine kinases LCK and FYN, resulting in the activation of downstream signaling pathways. In addition of this role of signal transduction in T-cell activation, CD3D plays an essential role in thymocyte differentiation. Indeed, participates in correct intracellular TCR-CD3 complex assembly and surface expression. In absence of a functional TCR-CD3 complex, thymocytes are unable to differentiate properly. Interacts with CD4 and CD8 and thus serves to establish a functional link between the TCR and coreceptors CD4 and CD8, which is needed for activation and positive selection of CD4 or CD8 T-cells. The sequence is that of T-cell surface glycoprotein CD3 delta chain (CD3D) from Homo sapiens (Human).